The sequence spans 296 residues: Protoheme IX farnesyltransferase (296 aa).

Residues 1 to 9 (MMFKQYLQV) lie on the Cytoplasmic side of the membrane. The helical transmembrane segment at 10–28 (TKPGIIFGNLISVIGGFLL) threads the bilayer. Topologically, residues 29-37 (ASKGSIDYP) are periplasmic. A helical transmembrane segment spans residues 38-56 (LFIYTLVGVSLVVASGCVF). Residues 57–78 (NNYIDRDIDRKMERTKNRVLVK) are Cytoplasmic-facing. Residues 79–97 (GLISPAVSLVYATLLGIAG) form a helical membrane-spanning segment. Residues 98-107 (FMLLWFGANP) lie on the Periplasmic side of the membrane. The chain crosses the membrane as a helical span at residues 108-126 (LACWLGVMGFVVYVGVYSL). Residues 127-197 (YMKRHSVYGT…YQAANIPVLP (71 aa)) lie on the Cytoplasmic side of the membrane. A helical transmembrane segment spans residues 198-216 (VVKGISVAKNHITLYIIAF). The Periplasmic portion of the chain corresponds to 217–228 (AVATLMLSLGGY). A helical membrane pass occupies residues 229 to 247 (AGYKYLVVAAAVSVWWLGM). Topologically, residues 248–268 (ALRGYKVADDRIWARKLFGFS) are cytoplasmic. The helical transmembrane segment at 269–287 (IIAITALSVMMSVDFMVPD) threads the bilayer. The Periplasmic portion of the chain corresponds to 288-296 (SHTLLAAVW).

Belongs to the UbiA prenyltransferase family. Protoheme IX farnesyltransferase subfamily.

The protein resides in the cell inner membrane. The enzyme catalyses heme b + (2E,6E)-farnesyl diphosphate + H2O = Fe(II)-heme o + diphosphate. The protein operates within porphyrin-containing compound metabolism; heme O biosynthesis; heme O from protoheme: step 1/1. Functionally, converts heme B (protoheme IX) to heme O by substitution of the vinyl group on carbon 2 of heme B porphyrin ring with a hydroxyethyl farnesyl side group. The sequence is that of Protoheme IX farnesyltransferase from Escherichia coli O139:H28 (strain E24377A / ETEC).